The sequence spans 1254 residues: Protein transport protein Sec31A (1254 aa).

WD repeat units follow at residues 4–47 (KEIN…EIFE), 64–111 (SSPH…AGDS), 120–160 (KHTG…SPMT), 166–206 (QPQE…LIIK), 209–254 (DHSN…SPLK), 258–298 (NHTR…VLYE), and 301–341 (TSTQ…NDNA). A compositionally biased stretch (low complexity) spans 364 to 383 (TLPPLQLPQQTSPQSTITPL). The segment at 364 to 386 (TLPPLQLPQQTSPQSTITPLKKP) is disordered. A WD 8; interaction with SEC13 repeat occupies 397-428 (SFAFGGKLVTLDNIKPTAQQPQQTAAHVVHIS). Disordered stretches follow at residues 818–892 (PMQT…QSPA), 983–1008 (CFQH…GTQH), and 1058–1125 (PPAP…PGAP). The span at 832–846 (AQPAAPAVPPQYYQQ) shows a compositional bias: low complexity. 2 stretches are compositionally biased toward polar residues: residues 847-863 (GRSA…TPTA) and 872-881 (VPSSDPQGDS). Positions 1080–1091 (QTLQPQQQVPDQ) are enriched in low complexity.

The protein belongs to the WD repeat SEC31 family. COPII is composed of at least 5 proteins: the SEC23/24 complex, the SEC13/31 complex and SAR1. SEC13 and SEC31 make a 2:2 tetramer that forms the edge element of the COPII outer coat. The tetramer self-assembles in multiple copies to form the complete polyhedral cage. Interacts (via WD 8) with SEC13.

The protein localises to the cytoplasm. Its subcellular location is the cytoplasmic vesicle. The protein resides in the COPII-coated vesicle membrane. It localises to the endoplasmic reticulum membrane. Functionally, component of the coat protein complex II (COPII) which promotes the formation of transport vesicles from the endoplasmic reticulum (ER). The coat has two main functions, the physical deformation of the endoplasmic reticulum membrane into vesicles and the selection of cargo molecules. The protein is Protein transport protein Sec31A (sec31a) of Danio rerio (Zebrafish).